The chain runs to 318 residues: Protein disulfide-isomerase MPD1 (318 aa).

Positions 1–21 (MLFLNIIKLLLGLFIMNEVKA) are cleaved as a signal peptide. Residues 22-158 (QNFYDSDPHI…SLSRIRSYVK (137 aa)) enclose the Thioredoxin domain. A glycan (N-linked (GlcNAc...) asparagine) is linked at asparagine 47. The cysteines at positions 59 and 62 are disulfide-linked. An N-linked (GlcNAc...) asparagine glycan is attached at asparagine 307. The Prevents secretion from ER signature appears at 315–318 (HDEL).

The protein belongs to the protein disulfide isomerase family. As to quaternary structure, interacts with CNE1 and EPS1.

It localises to the endoplasmic reticulum lumen. It carries out the reaction Catalyzes the rearrangement of -S-S- bonds in proteins.. Its function is as follows. Participates in the folding of proteins containing disulfide bonds. This is Protein disulfide-isomerase MPD1 (MPD1) from Saccharomyces cerevisiae (strain ATCC 204508 / S288c) (Baker's yeast).